Reading from the N-terminus, the 519-residue chain is Cytochrome P450 4A22 (519 aa).

A propeptide spanning residues 1–4 (MSVS) is cleaved from the precursor. A heme-binding site is contributed by glutamate 321. Serine 440 is subject to Phosphoserine. Heme is bound at residue cysteine 457.

It belongs to the cytochrome P450 family.

The protein resides in the endoplasmic reticulum membrane. The protein localises to the microsome membrane. It catalyses the reaction an omega-methyl-long-chain fatty acid + reduced [NADPH--hemoprotein reductase] + O2 = an omega-hydroxy-long-chain fatty acid + oxidized [NADPH--hemoprotein reductase] + H2O + H(+). In terms of biological role, catalyzes the omega- and (omega-1)-hydroxylation of various fatty acids such as laurate and palmitate. Shows no activity towards arachidonic acid and prostaglandin A1. Lacks functional activity in the kidney and does not contribute to renal 20-hydroxyeicosatetraenoic acid (20-HETE) biosynthesis. The polypeptide is Cytochrome P450 4A22 (CYP4A22) (Homo sapiens (Human)).